A 204-amino-acid polypeptide reads, in one-letter code: Imidazoleglycerol-phosphate dehydratase (204 aa).

The protein belongs to the imidazoleglycerol-phosphate dehydratase family.

The protein resides in the cytoplasm. The enzyme catalyses D-erythro-1-(imidazol-4-yl)glycerol 3-phosphate = 3-(imidazol-4-yl)-2-oxopropyl phosphate + H2O. It functions in the pathway amino-acid biosynthesis; L-histidine biosynthesis; L-histidine from 5-phospho-alpha-D-ribose 1-diphosphate: step 6/9. The polypeptide is Imidazoleglycerol-phosphate dehydratase (Rhodococcus jostii (strain RHA1)).